The chain runs to 217 residues: Probable septum site-determining protein MinC (217 aa).

It belongs to the MinC family. In terms of assembly, interacts with MinD and FtsZ.

Its function is as follows. Cell division inhibitor that blocks the formation of polar Z ring septums. Rapidly oscillates between the poles of the cell to destabilize FtsZ filaments that have formed before they mature into polar Z rings. Prevents FtsZ polymerization. The polypeptide is Probable septum site-determining protein MinC (Pelotomaculum thermopropionicum (strain DSM 13744 / JCM 10971 / SI)).